Consider the following 398-residue polypeptide: 1-deoxy-D-xylulose 5-phosphate reductoisomerase (398 aa).

Thr11, Gly12, Ser13, Ile14, and Asn125 together coordinate NADPH. 1-deoxy-D-xylulose 5-phosphate is bound at residue Lys126. Glu127 lines the NADPH pocket. Asp151 is a binding site for Mn(2+). 1-deoxy-D-xylulose 5-phosphate is bound by residues Ser152, Glu153, Ser186, and His209. Glu153 lines the Mn(2+) pocket. Gly215 contributes to the NADPH binding site. 4 residues coordinate 1-deoxy-D-xylulose 5-phosphate: Ser222, Asn227, Lys228, and Glu231. Glu231 lines the Mn(2+) pocket.

This sequence belongs to the DXR family. The cofactor is Mg(2+). Mn(2+) serves as cofactor.

The catalysed reaction is 2-C-methyl-D-erythritol 4-phosphate + NADP(+) = 1-deoxy-D-xylulose 5-phosphate + NADPH + H(+). Its pathway is isoprenoid biosynthesis; isopentenyl diphosphate biosynthesis via DXP pathway; isopentenyl diphosphate from 1-deoxy-D-xylulose 5-phosphate: step 1/6. Catalyzes the NADPH-dependent rearrangement and reduction of 1-deoxy-D-xylulose-5-phosphate (DXP) to 2-C-methyl-D-erythritol 4-phosphate (MEP). This is 1-deoxy-D-xylulose 5-phosphate reductoisomerase from Acinetobacter baumannii (strain AB307-0294).